The following is a 238-amino-acid chain: Photosynthetic NDH subunit of lumenal location 1, chloroplastic (238 aa).

Belongs to the PsbP family. As to quaternary structure, part of the chloroplast NDH complex, composed of a mixture of chloroplast and nucleus encoded subunits. Component of the NDH lumenal subcomplex, at least composed of PnsL1, PnsL2, PnsL3, PnsL4 and PnsL5.

It localises to the plastid. The protein localises to the chloroplast thylakoid membrane. In terms of biological role, NDH shuttles electrons from NAD(P)H:plastoquinone, via FMN and iron-sulfur (Fe-S) centers, to quinones in the photosynthetic chain and possibly in a chloroplast respiratory chain. The immediate electron acceptor for the enzyme in this species is believed to be plastoquinone. Couples the redox reaction to proton translocation, and thus conserves the redox energy in a proton gradient. Required for accumulation of the chloroplast NAD(P)H dehydrogenase (NDH) complex. The sequence is that of Photosynthetic NDH subunit of lumenal location 1, chloroplastic from Arabidopsis thaliana (Mouse-ear cress).